The primary structure comprises 414 residues: Esterase FrsA (414 aa).

Belongs to the FrsA family.

The catalysed reaction is a carboxylic ester + H2O = an alcohol + a carboxylate + H(+). Its function is as follows. Catalyzes the hydrolysis of esters. The polypeptide is Esterase FrsA (Salmonella typhi).